Consider the following 105-residue polypeptide: UPF0145 protein lpl0253 (105 aa).

Belongs to the UPF0145 family.

The polypeptide is UPF0145 protein lpl0253 (Legionella pneumophila (strain Lens)).